We begin with the raw amino-acid sequence, 792 residues long: Terminal nucleotidyltransferase 4A (792 aa).

Residues 55–191 (GAAGRGSGGL…QFHPGRRKRE (137 aa)) are disordered. 2 stretches are compositionally biased toward low complexity: residues 80–97 (APAALPPALLTALGPAAE) and 105–139 (SPSLSSSSSSSSSNAESGTESPGCSSSSSSSASLG). Positions 297 and 299 each coordinate Mg(2+). Residues G360, K385, S403, and Y404 each coordinate ATP. One can recognise a PAP-associated domain in the interval 428-486 (NLGMLLVEFFELYGRNFNYLKTGIRIKEGGAYIAKEEIMKAMTSGYRPSMLCIEDPLLP). ATP contacts are provided by N488 and R492. Residues 601-619 (QLLSSGSSASSVSSLSGSD) are compositionally biased toward low complexity. Disordered stretches follow at residues 601-632 (QLLSSGSSASSVSSLSGSDVDSDTPPCTTPSV) and 737-792 (MKGS…SLSR). The span at 744-756 (TQGGGYSSVGSGG) shows a compositional bias: gly residues. A compositionally biased stretch (basic residues) spans 764 to 781 (RGHHQYNRTGWRRKKHTH).

This sequence belongs to the DNA polymerase type-B-like family. As to quaternary structure, component of a nuclear TRAMP-like complex, an ATP-dependent exosome regulatory complex consisting of a helicase (MTREX), an oligadenylate polymerase (TENT4B or TENT4A), and a substrate specific RNA-binding factor (ZCCHC7 or ZCCHC8). Several TRAMP-like complexes exist with specific compositions and are associated with nuclear, or nucleolar RNA exosomes. Mg(2+) is required as a cofactor. The cofactor is Mn(2+).

It is found in the cytoplasm. It localises to the nucleus. Its subcellular location is the nucleoplasm. The catalysed reaction is RNA(n) + ATP = RNA(n)-3'-adenine ribonucleotide + diphosphate. In terms of biological role, terminal nucleotidyltransferase that catalyzes preferentially the transfer of ATP and GTP on RNA 3' poly(A) tail creating a heterogeneous 3' poly(A) tail leading to mRNAs stabilization by protecting mRNAs from active deadenylation. Also functions as a catalytic subunit of a TRAMP-like complex which has a poly(A) RNA polymerase activity and is involved in a post-transcriptional quality control mechanism. Polyadenylation with short oligo(A) tails is required for the degradative activity of the exosome on several of its nuclear RNA substrates. Has no terminal uridylyltransferase activity, and does not play a role in replication-dependent histone mRNA degradation via uridylation. The chain is Terminal nucleotidyltransferase 4A from Homo sapiens (Human).